The chain runs to 584 residues: J protein JJJ2 (584 aa).

The J domain occupies 13-77; that stretch reads TYYSILGLTS…DQKLRYDRDL (65 aa). Positions 216-312 are disordered; it reads YSEDPNSCLG…FSSGSHDSNL (97 aa). Ser-229 bears the Phosphoserine mark. Residues 241 to 253 are compositionally biased toward low complexity; the sequence is QQQQQQQQQQQQQ. Residues 269–282 show a composition bias toward basic and acidic residues; the sequence is KDNKESKRESRVSP. The span at 299–312 shows a compositional bias: polar residues; that stretch reads KTSTFSSGSHDSNL.

It localises to the cytoplasm. The protein resides in the nucleus. The chain is J protein JJJ2 (JJJ2) from Saccharomyces cerevisiae (strain YJM789) (Baker's yeast).